A 343-amino-acid chain; its full sequence is D-alanine--D-alanine ligase (343 aa).

The region spanning 132 to 337 (KNLFSYHKIP…YPDLIDKLIE (206 aa)) is the ATP-grasp domain. Residue 165–220 (DRFLGWPCFVKPANMGSSIGVSKVHSPGEVKKALEKGFYYDRKLIFEEFVEGREIE) participates in ATP binding. Mg(2+) is bound by residues aspartate 291, glutamate 304, and asparagine 306.

The protein belongs to the D-alanine--D-alanine ligase family. It depends on Mg(2+) as a cofactor. Mn(2+) serves as cofactor.

It localises to the cytoplasm. It catalyses the reaction 2 D-alanine + ATP = D-alanyl-D-alanine + ADP + phosphate + H(+). It functions in the pathway cell wall biogenesis; peptidoglycan biosynthesis. Functionally, cell wall formation. In Halothermothrix orenii (strain H 168 / OCM 544 / DSM 9562), this protein is D-alanine--D-alanine ligase.